The primary structure comprises 207 residues: ATP-dependent Clp protease proteolytic subunit (207 aa).

S111 functions as the Nucleophile in the catalytic mechanism. H136 is a catalytic residue.

It belongs to the peptidase S14 family. In terms of assembly, fourteen ClpP subunits assemble into 2 heptameric rings which stack back to back to give a disk-like structure with a central cavity, resembling the structure of eukaryotic proteasomes.

The protein resides in the cytoplasm. It carries out the reaction Hydrolysis of proteins to small peptides in the presence of ATP and magnesium. alpha-casein is the usual test substrate. In the absence of ATP, only oligopeptides shorter than five residues are hydrolyzed (such as succinyl-Leu-Tyr-|-NHMec, and Leu-Tyr-Leu-|-Tyr-Trp, in which cleavage of the -Tyr-|-Leu- and -Tyr-|-Trp bonds also occurs).. Its function is as follows. Cleaves peptides in various proteins in a process that requires ATP hydrolysis. Has a chymotrypsin-like activity. Plays a major role in the degradation of misfolded proteins. The sequence is that of ATP-dependent Clp protease proteolytic subunit from Proteus mirabilis (strain HI4320).